Reading from the N-terminus, the 386-residue chain is uncharacterized protein (386 aa).

This sequence belongs to the TelA family.

This is an uncharacterized protein from Bacillus subtilis (strain 168).